A 199-amino-acid polypeptide reads, in one-letter code: Pyridoxal 5'-phosphate synthase subunit PdxT (199 aa).

47–49 (GES) provides a ligand contact to L-glutamine. Residue C79 is the Nucleophile of the active site. L-glutamine contacts are provided by residues R106 and 133-134 (IR). Active-site charge relay system residues include H169 and E171.

The protein belongs to the glutaminase PdxT/SNO family. In the presence of PdxS, forms a dodecamer of heterodimers. Only shows activity in the heterodimer.

It catalyses the reaction aldehydo-D-ribose 5-phosphate + D-glyceraldehyde 3-phosphate + L-glutamine = pyridoxal 5'-phosphate + L-glutamate + phosphate + 3 H2O + H(+). The enzyme catalyses L-glutamine + H2O = L-glutamate + NH4(+). Its pathway is cofactor biosynthesis; pyridoxal 5'-phosphate biosynthesis. Catalyzes the hydrolysis of glutamine to glutamate and ammonia as part of the biosynthesis of pyridoxal 5'-phosphate. The resulting ammonia molecule is channeled to the active site of PdxS. The polypeptide is Pyridoxal 5'-phosphate synthase subunit PdxT (Desulfitobacterium hafniense (strain DSM 10664 / DCB-2)).